A 95-amino-acid chain; its full sequence is Large ribosomal subunit protein uL23 (95 aa).

Belongs to the universal ribosomal protein uL23 family. In terms of assembly, part of the 50S ribosomal subunit. Contacts protein L29, and trigger factor when it is bound to the ribosome.

Functionally, one of the early assembly proteins it binds 23S rRNA. One of the proteins that surrounds the polypeptide exit tunnel on the outside of the ribosome. Forms the main docking site for trigger factor binding to the ribosome. The sequence is that of Large ribosomal subunit protein uL23 from Bacillus licheniformis (strain ATCC 14580 / DSM 13 / JCM 2505 / CCUG 7422 / NBRC 12200 / NCIMB 9375 / NCTC 10341 / NRRL NRS-1264 / Gibson 46).